A 232-amino-acid polypeptide reads, in one-letter code: Leucyl/phenylalanyl-tRNA--protein transferase (232 aa).

The protein belongs to the L/F-transferase family.

The protein resides in the cytoplasm. The catalysed reaction is N-terminal L-lysyl-[protein] + L-leucyl-tRNA(Leu) = N-terminal L-leucyl-L-lysyl-[protein] + tRNA(Leu) + H(+). It carries out the reaction N-terminal L-arginyl-[protein] + L-leucyl-tRNA(Leu) = N-terminal L-leucyl-L-arginyl-[protein] + tRNA(Leu) + H(+). The enzyme catalyses L-phenylalanyl-tRNA(Phe) + an N-terminal L-alpha-aminoacyl-[protein] = an N-terminal L-phenylalanyl-L-alpha-aminoacyl-[protein] + tRNA(Phe). Its function is as follows. Functions in the N-end rule pathway of protein degradation where it conjugates Leu, Phe and, less efficiently, Met from aminoacyl-tRNAs to the N-termini of proteins containing an N-terminal arginine or lysine. The polypeptide is Leucyl/phenylalanyl-tRNA--protein transferase (Nitrosospira multiformis (strain ATCC 25196 / NCIMB 11849 / C 71)).